A 223-amino-acid polypeptide reads, in one-letter code: NADH-quinone oxidoreductase subunit C (223 aa).

Belongs to the complex I 30 kDa subunit family. In terms of assembly, NDH-1 is composed of 14 different subunits. Subunits NuoB, C, D, E, F, and G constitute the peripheral sector of the complex.

The protein resides in the cell inner membrane. The enzyme catalyses a quinone + NADH + 5 H(+)(in) = a quinol + NAD(+) + 4 H(+)(out). Its function is as follows. NDH-1 shuttles electrons from NADH, via FMN and iron-sulfur (Fe-S) centers, to quinones in the respiratory chain. The immediate electron acceptor for the enzyme in this species is believed to be ubiquinone. Couples the redox reaction to proton translocation (for every two electrons transferred, four hydrogen ions are translocated across the cytoplasmic membrane), and thus conserves the redox energy in a proton gradient. The sequence is that of NADH-quinone oxidoreductase subunit C from Hydrogenovibrio crunogenus (strain DSM 25203 / XCL-2) (Thiomicrospira crunogena).